Reading from the N-terminus, the 528-residue chain is Protein MGF 505-7R (528 aa).

5 ANK repeats span residues 54 to 83 (SIND…NLHY), 129 to 158 (GCDL…LLNV), 261 to 290 (SVKR…IPRG), 292 to 321 (IERL…YKVK), and 322 to 352 (NVKK…LLDA).

The protein belongs to the asfivirus MGF 505 family. In terms of assembly, interacts with host STING1. Interacts with host JAK1; this interaction leads to JAK1 degradation. Interacts with host JAK2; this interaction leads to JAK2 degradation. Interacts with host RELA; this interaction inhibits NF-kappa-B promoter activity.

The protein localises to the host cytoplasm. Functionally, plays a role in virus cell tropism, and may be required for efficient virus replication in macrophages. Interferes with host NF-kappa-B promoter activity mediated by TLR8. Mechanistically, inhibits the phosphorylation and subsequent nuclear translocation of host NF-kappa-B RELA subunit downstream of TLR8. Promotes the expression of the autophagy-related protein host ULK1 to degrade host STING and inhibit the interferon response. Inhibits also JAK1- and JAK2-mediated signaling and thus negatively regulates the IFN-gamma signaling. The chain is Protein MGF 505-7R from African swine fever virus (strain Badajoz 1971 Vero-adapted) (Ba71V).